Reading from the N-terminus, the 225-residue chain is ATP synthase subunit a (225 aa).

The next 6 membrane-spanning stretches (helical) occupy residues Leu18–Leu38, Ile73–Ile93, Met100–Ile120, Met126–Ile146, Gly156–Leu176, and Ile187–Met207.

The protein belongs to the ATPase A chain family. In terms of assembly, F-type ATPases have 2 components, CF(1) - the catalytic core - and CF(0) - the membrane proton channel. CF(1) has five subunits: alpha(3), beta(3), gamma(1), delta(1), epsilon(1). CF(0) has three main subunits: a, b and c.

It is found in the mitochondrion inner membrane. Its function is as follows. Mitochondrial membrane ATP synthase (F(1)F(0) ATP synthase or Complex V) produces ATP from ADP in the presence of a proton gradient across the membrane which is generated by electron transport complexes of the respiratory chain. F-type ATPases consist of two structural domains, F(1) - containing the extramembraneous catalytic core and F(0) - containing the membrane proton channel, linked together by a central stalk and a peripheral stalk. During catalysis, ATP synthesis in the catalytic domain of F(1) is coupled via a rotary mechanism of the central stalk subunits to proton translocation. Key component of the proton channel; it may play a direct role in the translocation of protons across the membrane. This chain is ATP synthase subunit a (ATP6), found in Locusta migratoria (Migratory locust).